A 101-amino-acid chain; its full sequence is Small ribosomal subunit protein uS14 (101 aa).

Belongs to the universal ribosomal protein uS14 family. As to quaternary structure, part of the 30S ribosomal subunit. Contacts proteins S3 and S10.

Binds 16S rRNA, required for the assembly of 30S particles and may also be responsible for determining the conformation of the 16S rRNA at the A site. In Cereibacter sphaeroides (strain ATCC 17029 / ATH 2.4.9) (Rhodobacter sphaeroides), this protein is Small ribosomal subunit protein uS14.